Here is a 132-residue protein sequence, read N- to C-terminus: Small ribosomal subunit protein uS8 (132 aa).

This sequence belongs to the universal ribosomal protein uS8 family. Part of the 30S ribosomal subunit. Contacts proteins S5 and S12.

Its function is as follows. One of the primary rRNA binding proteins, it binds directly to 16S rRNA central domain where it helps coordinate assembly of the platform of the 30S subunit. The sequence is that of Small ribosomal subunit protein uS8 from Streptococcus agalactiae serotype V (strain ATCC BAA-611 / 2603 V/R).